A 449-amino-acid polypeptide reads, in one-letter code: 23S rRNA (uracil(1939)-C(5))-methyltransferase RlmD (449 aa).

Positions S12 to K70 constitute a TRAM domain. [4Fe-4S] cluster is bound by residues C83, C89, C92, and C170. S-adenosyl-L-methionine contacts are provided by Q282, F311, N316, E332, D359, and D379. The active-site Nucleophile is the C405.

The protein belongs to the class I-like SAM-binding methyltransferase superfamily. RNA M5U methyltransferase family. RlmD subfamily.

The catalysed reaction is uridine(1939) in 23S rRNA + S-adenosyl-L-methionine = 5-methyluridine(1939) in 23S rRNA + S-adenosyl-L-homocysteine + H(+). In terms of biological role, catalyzes the formation of 5-methyl-uridine at position 1939 (m5U1939) in 23S rRNA. This chain is 23S rRNA (uracil(1939)-C(5))-methyltransferase RlmD, found in Shewanella sp. (strain MR-4).